We begin with the raw amino-acid sequence, 72 residues long: Large ribosomal subunit protein bL31c (72 aa).

This sequence belongs to the bacterial ribosomal protein bL31 family. Type A subfamily. In terms of assembly, part of the 50S ribosomal subunit.

It is found in the plastid. Its subcellular location is the chloroplast. Functionally, binds the 23S rRNA. The sequence is that of Large ribosomal subunit protein bL31c (rpl31) from Phaeodactylum tricornutum (strain CCAP 1055/1).